The chain runs to 146 residues: Hemoglobin subunit beta (146 aa).

Residue Val1 is modified to N-acetylvaline. The Globin domain maps to 2–146 (HLTPEEKSAV…VANALAHKYH (145 aa)). At Thr12 the chain carries Phosphothreonine. Phosphoserine is present on Ser44. N6-acetyllysine is present on Lys59. Residue His63 participates in heme b binding. Residue Lys82 is modified to N6-acetyllysine. Residue His92 coordinates heme b. Cys93 carries the S-nitrosocysteine modification. Position 144 is an N6-acetyllysine (Lys144).

It belongs to the globin family. Heterotetramer of two alpha chains and two beta chains. In terms of tissue distribution, red blood cells.

Functionally, involved in oxygen transport from the lung to the various peripheral tissues. In Hylobates lar (Lar gibbon), this protein is Hemoglobin subunit beta (HBB).